The chain runs to 108 residues: Large ribosomal subunit protein bL21 (108 aa).

The protein belongs to the bacterial ribosomal protein bL21 family. As to quaternary structure, part of the 50S ribosomal subunit. Contacts protein L20.

Its function is as follows. This protein binds to 23S rRNA in the presence of protein L20. In Buchnera aphidicola subsp. Acyrthosiphon pisum (strain 5A), this protein is Large ribosomal subunit protein bL21.